The primary structure comprises 548 residues: Chaperonin GroEL (548 aa).

ATP-binding positions include 29 to 32, Lys50, 86 to 90, Gly416, and Asp497; these read TLGP and DGTTT.

It belongs to the chaperonin (HSP60) family. In terms of assembly, forms a cylinder of 14 subunits composed of two heptameric rings stacked back-to-back. Interacts with the co-chaperonin GroES.

The protein localises to the cytoplasm. It carries out the reaction ATP + H2O + a folded polypeptide = ADP + phosphate + an unfolded polypeptide.. In terms of biological role, together with its co-chaperonin GroES, plays an essential role in assisting protein folding. The GroEL-GroES system forms a nano-cage that allows encapsulation of the non-native substrate proteins and provides a physical environment optimized to promote and accelerate protein folding. The protein is Chaperonin GroEL of Neorickettsia risticii (Ehrlichia risticii).